Reading from the N-terminus, the 134-residue chain is MENKKTIYFLCTGNSCRSQMAEAWGKQYLGDKWNVYSAGMEAHGVNPNAIKAMNEVNIDITNQTSDIIDANILNSADLVVTLCSHADSVCPSTPPHVNRVHWGFDDPAGKEWSEFQRVRDEIGERIKRFSKTGE.

Residues C11, C83, and C90 each act as nucleophile in the active site. Disulfide bonds link C11/C83 and C83/C90.

Belongs to the low molecular weight phosphotyrosine protein phosphatase family. Thioredoxin-coupled ArsC subfamily.

It is found in the cytoplasm. It carries out the reaction arsenate + [thioredoxin]-dithiol + H(+) = arsenite + [thioredoxin]-disulfide + H2O. In terms of biological role, catalyzes the reduction of arsenate [As(V)] to arsenite [As(III)]. This chain is Arsenate reductase, found in Bacillus cereus (strain ATCC 14579 / DSM 31 / CCUG 7414 / JCM 2152 / NBRC 15305 / NCIMB 9373 / NCTC 2599 / NRRL B-3711).